We begin with the raw amino-acid sequence, 530 residues long: CTP synthase (530 aa).

The segment at 1–264 is amidoligase domain; that stretch reads MPKLIIVTGG…GDFLTRRLRL (264 aa). Ser-13 is a binding site for CTP. UTP is bound at residue Ser-13. 14–19 provides a ligand contact to ATP; sequence GVGKGV. Tyr-54 contacts L-glutamine. Asp-71 contributes to the ATP binding site. Positions 71 and 139 each coordinate Mg(2+). Residues 146–148, 185–190, and Lys-221 contribute to the CTP site; these read DYE and KTKPLQ. Residues 185–190 and Lys-221 each bind UTP; that span reads KTKPLQ. The 242-residue stretch at 289 to 530 folds into the Glutamine amidotransferase type-1 domain; that stretch reads SVGMCGKYVE…LLKAALFAKR (242 aa). An L-glutamine-binding site is contributed by Gly-351. Residue Cys-378 is the Nucleophile; for glutamine hydrolysis of the active site. L-glutamine contacts are provided by residues 379–382, Glu-402, and Arg-459; that span reads FGMQ. Residues His-504 and Glu-506 contribute to the active site.

It belongs to the CTP synthase family. Homotetramer.

The catalysed reaction is UTP + L-glutamine + ATP + H2O = CTP + L-glutamate + ADP + phosphate + 2 H(+). It catalyses the reaction L-glutamine + H2O = L-glutamate + NH4(+). It carries out the reaction UTP + NH4(+) + ATP = CTP + ADP + phosphate + 2 H(+). The protein operates within pyrimidine metabolism; CTP biosynthesis via de novo pathway; CTP from UDP: step 2/2. Its activity is regulated as follows. Allosterically activated by GTP, when glutamine is the substrate; GTP has no effect on the reaction when ammonia is the substrate. The allosteric effector GTP functions by stabilizing the protein conformation that binds the tetrahedral intermediate(s) formed during glutamine hydrolysis. Inhibited by the product CTP, via allosteric rather than competitive inhibition. In terms of biological role, catalyzes the ATP-dependent amination of UTP to CTP with either L-glutamine or ammonia as the source of nitrogen. Regulates intracellular CTP levels through interactions with the four ribonucleotide triphosphates. The protein is CTP synthase of Pyrobaculum aerophilum (strain ATCC 51768 / DSM 7523 / JCM 9630 / CIP 104966 / NBRC 100827 / IM2).